The primary structure comprises 821 residues: Lon protease (821 aa).

Residues leucine 18 to isoleucine 216 form the Lon N-terminal domain. Residue glycine 368 to threonine 375 coordinates ATP. Positions threonine 606–alanine 787 constitute a Lon proteolytic domain. Catalysis depends on residues serine 693 and lysine 736.

The protein belongs to the peptidase S16 family. In terms of assembly, homohexamer. Organized in a ring with a central cavity.

Its subcellular location is the cytoplasm. The enzyme catalyses Hydrolysis of proteins in presence of ATP.. Functionally, ATP-dependent serine protease that mediates the selective degradation of mutant and abnormal proteins as well as certain short-lived regulatory proteins. Required for cellular homeostasis and for survival from DNA damage and developmental changes induced by stress. Degrades polypeptides processively to yield small peptide fragments that are 5 to 10 amino acids long. Binds to DNA in a double-stranded, site-specific manner. In Nitratidesulfovibrio vulgaris (strain ATCC 29579 / DSM 644 / CCUG 34227 / NCIMB 8303 / VKM B-1760 / Hildenborough) (Desulfovibrio vulgaris), this protein is Lon protease.